Reading from the N-terminus, the 674-residue chain is UvrABC system protein B (674 aa).

One can recognise a Helicase ATP-binding domain in the interval 26–183 (EGLEDGLAHQ…RRLAELQYTR (158 aa)). 39 to 46 (GVTGSGKT) is an ATP binding site. Positions 92–115 (YYDYYQPEAYVPSSDTFIEKDASV) match the Beta-hairpin motif. One can recognise a Helicase C-terminal domain in the interval 431–597 (QVDDLLSEIR…GLNKKISDIL (167 aa)). Residues 634–669 (QKRIHQLEAQMQQHAQNLEFEEAAQVRDQLHQVREL) form the UVR domain.

Belongs to the UvrB family. As to quaternary structure, forms a heterotetramer with UvrA during the search for lesions. Interacts with UvrC in an incision complex.

The protein localises to the cytoplasm. The UvrABC repair system catalyzes the recognition and processing of DNA lesions. A damage recognition complex composed of 2 UvrA and 2 UvrB subunits scans DNA for abnormalities. Upon binding of the UvrA(2)B(2) complex to a putative damaged site, the DNA wraps around one UvrB monomer. DNA wrap is dependent on ATP binding by UvrB and probably causes local melting of the DNA helix, facilitating insertion of UvrB beta-hairpin between the DNA strands. Then UvrB probes one DNA strand for the presence of a lesion. If a lesion is found the UvrA subunits dissociate and the UvrB-DNA preincision complex is formed. This complex is subsequently bound by UvrC and the second UvrB is released. If no lesion is found, the DNA wraps around the other UvrB subunit that will check the other stand for damage. The sequence is that of UvrABC system protein B from Erwinia tasmaniensis (strain DSM 17950 / CFBP 7177 / CIP 109463 / NCPPB 4357 / Et1/99).